The following is a 464-amino-acid chain: Propanal dehydrogenase (CoA-propanoylating) (464 aa).

The targets protein to the BMC stretch occupies residues Met1–Leu18.

This sequence belongs to the EutE/PduP family. As to quaternary structure, interacts with BMC shell proteins PduA and PduJ, which target this protein to BMC. Interacts with PduQ, probably via the N-terminus of PduQ. Interacts with PduK, probably with its BMC-containing N-terminus.

It is found in the bacterial microcompartment. The catalysed reaction is propanal + NAD(+) + CoA = propanoyl-CoA + NADH + H(+). The protein operates within polyol metabolism; 1,2-propanediol degradation. Its function is as follows. A CoA-acylating aldehyde dehydrogenase required for optimal 1,2-propanediol (1,2-PD) degradation. Optimizes growth in the bacterial microcompartment (BMC) dedicated to 1,2-PD degradation by minimizing propionaldehyde toxicity. Directly targeted to the BMC. NAD(+) and NADH are regenerated internally within the Pdu BMC by the PduP and PduQ enzymes, which reduce NAD(+) and oxidize NADH respectively, although there must also be cofactor transport across the BMC. Functionally, the 1,2-PD-specific bacterial microcompartment (BMC) concentrates low levels of 1,2-PD catabolic enzymes, concentrates volatile reaction intermediates thus enhancing pathway flux and keeps the level of toxic, mutagenic propionaldehyde low. The polypeptide is Propanal dehydrogenase (CoA-propanoylating) (Salmonella typhimurium (strain LT2 / SGSC1412 / ATCC 700720)).